A 457-amino-acid polypeptide reads, in one-letter code: Serine--tRNA ligase (457 aa).

252 to 254 (TAE) is a binding site for L-serine. Residues 283 to 285 (RKE) and valine 299 contribute to the ATP site. Glutamate 306 lines the L-serine pocket. Residue 370-373 (EVVS) coordinates ATP. Threonine 406 contributes to the L-serine binding site.

Belongs to the class-II aminoacyl-tRNA synthetase family. Type-1 seryl-tRNA synthetase subfamily. As to quaternary structure, homodimer. The tRNA molecule binds across the dimer.

The protein resides in the cytoplasm. The enzyme catalyses tRNA(Ser) + L-serine + ATP = L-seryl-tRNA(Ser) + AMP + diphosphate + H(+). It carries out the reaction tRNA(Sec) + L-serine + ATP = L-seryl-tRNA(Sec) + AMP + diphosphate + H(+). The protein operates within aminoacyl-tRNA biosynthesis; selenocysteinyl-tRNA(Sec) biosynthesis; L-seryl-tRNA(Sec) from L-serine and tRNA(Sec): step 1/1. Catalyzes the attachment of serine to tRNA(Ser). Is also able to aminoacylate tRNA(Sec) with serine, to form the misacylated tRNA L-seryl-tRNA(Sec), which will be further converted into selenocysteinyl-tRNA(Sec). The protein is Serine--tRNA ligase of Thermococcus onnurineus (strain NA1).